We begin with the raw amino-acid sequence, 549 residues long: Cation/acetate symporter ActP (549 aa).

The next 13 membrane-spanning stretches (helical) occupy residues 33 to 53 (WQAI…TYWA), 77 to 97 (LAIA…ALVF), 103 to 123 (GLIY…LIAE), 148 to 168 (ILSA…QMVG), 183 to 203 (IAVV…GMLA), 206 to 226 (WVQI…AFMV), 262 to 282 (ISAL…PHIL), 303 to 323 (GFMG…IMLV), 355 to 375 (LFLG…VAGL), 404 to 424 (VSKI…FLFE), 428 to 448 (IAFM…PIIL), 464 to 484 (GGWL…TIWV), and 493 to 513 (IFPY…GIWF).

Belongs to the sodium:solute symporter (SSF) (TC 2.A.21) family.

The protein resides in the cell inner membrane. Functionally, transports acetate. The protein is Cation/acetate symporter ActP of Salmonella paratyphi C (strain RKS4594).